Here is a 249-residue protein sequence, read N- to C-terminus: ATP synthase subunit a, chloroplastic (249 aa).

Transmembrane regions (helical) follow at residues Q40–V60, V97–L117, I136–S156, L201–L221, and G222–G242.

Belongs to the ATPase A chain family. In terms of assembly, F-type ATPases have 2 components, CF(1) - the catalytic core - and CF(0) - the membrane proton channel. CF(1) has five subunits: alpha(3), beta(3), gamma(1), delta(1), epsilon(1). CF(0) has four main subunits: a, b, b' and c.

The protein localises to the plastid. It is found in the chloroplast thylakoid membrane. Key component of the proton channel; it plays a direct role in the translocation of protons across the membrane. In Draba nemorosa (Woodland whitlowgrass), this protein is ATP synthase subunit a, chloroplastic.